Reading from the N-terminus, the 1209-residue chain is Phospholipid-transporting ATPase ID (1209 aa).

The Cytoplasmic portion of the chain corresponds to 1 to 68 (MTVPKEIPEK…NIVTFLPVNL (68 aa)). Positions 12-36 (ARAGAPPSWSQKKPSWGTEEERRAR) are disordered. A helical transmembrane segment spans residues 69–89 (FEQFQEVANTYFLFLLILQLI). The Exoplasmic loop portion of the chain corresponds to 90 to 91 (PQ). A helical transmembrane segment spans residues 92 to 112 (ISSLSWFTTIVPLVLVLTITA). Topologically, residues 113-295 (VKDATDDYFR…TSIDRLMNTL (183 aa)) are cytoplasmic. Residues 296 to 316 (VLWIFGFLVCMGVILAIGNAI) form a helical membrane-spanning segment. The Exoplasmic loop segment spans residues 317 to 338 (WEHEVGTRFQVYLPWDEAVDSA). The helical transmembrane segment at 339–359 (FFSGFLSFWSYIIILNTVVPI) threads the bilayer. Over 360-898 (SLYVSVEVIR…KFLCYFFYKN (539 aa)) the chain is Cytoplasmic. Asp-411 functions as the 4-aspartylphosphate intermediate in the catalytic mechanism. ATP contacts are provided by Asp-411, Lys-412, Thr-413, Glu-515, Phe-556, Lys-579, Arg-613, Thr-693, Gly-694, Asp-695, Arg-807, and Lys-813. A Mg(2+)-binding site is contributed by Asp-411. Thr-413 serves as a coordination point for Mg(2+). A Mg(2+)-binding site is contributed by Asp-833. Asn-836 and Asp-837 together coordinate ATP. Asp-837 is a binding site for Mg(2+). Residues 899 to 919 (FAFTMVHFWFGFFCGFSAQTV) form a helical membrane-spanning segment. Residues 920-922 (YDQ) lie on the Exoplasmic loop side of the membrane. A helical transmembrane segment spans residues 923–943 (YFITLYNIVYTSLPVLAMGVF). At 944–972 (DQDVPEQRSMEYPKLYEPGQLNLLFNKRE) the chain is on the cytoplasmic side. Residues 973-993 (FFICIAQGIYTSVLMFFIPYG) traverse the membrane as a helical segment. At 994–1011 (VFAEATRDDGTQLADYQS) the chain is on the exoplasmic loop side. A helical membrane pass occupies residues 1012 to 1032 (FAVTVATSLVIVVSVQIGLDT). The Cytoplasmic portion of the chain corresponds to 1033–1036 (GYWT). Residues 1037–1057 (AINHFFIWGSLAVYFAILFAM) form a helical membrane-spanning segment. Over 1058–1082 (HSNGLFDMFPNQFRFVGNAQNTLAQ) the chain is Exoplasmic loop. Residues 1083–1103 (PTVWLTIALTTAVCIMPVVAF) form a helical membrane-spanning segment. The Cytoplasmic portion of the chain corresponds to 1104 to 1209 (RFLRLSLKPD…SGGAEKPLKG (106 aa)). At Ser-1175 the chain carries Phosphoserine. A disordered region spans residues 1179–1209 (RSSSSWIESLRRKKSDSANSPSGGAEKPLKG).

Belongs to the cation transport ATPase (P-type) (TC 3.A.3) family. Type IV subfamily. In terms of assembly, component of a P4-ATPase flippase complex which consists of a catalytic alpha subunit ATP8B2 and an accessory beta subunit TMEM30A or TMEM30B. It depends on Mg(2+) as a cofactor. As to expression, expressed in brain and testes (at protein level).

The protein localises to the cell membrane. The protein resides in the endoplasmic reticulum membrane. The catalysed reaction is ATP + H2O + phospholipidSide 1 = ADP + phosphate + phospholipidSide 2.. It carries out the reaction a 1,2-diacyl-sn-glycero-3-phosphocholine(out) + ATP + H2O = a 1,2-diacyl-sn-glycero-3-phosphocholine(in) + ADP + phosphate + H(+). Its function is as follows. Catalytic component of P4-ATPase flippase complex, which catalyzes the hydrolysis of ATP coupled to the transport of phosphatidylcholine (PC) from the outer to the inner leaflet of the plasma membrane. May contribute to the maintenance of membrane lipid asymmetry. The sequence is that of Phospholipid-transporting ATPase ID from Mus musculus (Mouse).